The chain runs to 688 residues: Elongation factor G (688 aa).

Positions 8–282 (EKFRNFGIMA…GVVDYLPSPL (275 aa)) constitute a tr-type G domain. Residues 17 to 24 (AHIDAGKT), 81 to 85 (DTPGH), and 135 to 138 (NKMD) each bind GTP.

It belongs to the TRAFAC class translation factor GTPase superfamily. Classic translation factor GTPase family. EF-G/EF-2 subfamily.

It localises to the cytoplasm. Its function is as follows. Catalyzes the GTP-dependent ribosomal translocation step during translation elongation. During this step, the ribosome changes from the pre-translocational (PRE) to the post-translocational (POST) state as the newly formed A-site-bound peptidyl-tRNA and P-site-bound deacylated tRNA move to the P and E sites, respectively. Catalyzes the coordinated movement of the two tRNA molecules, the mRNA and conformational changes in the ribosome. The sequence is that of Elongation factor G from Clostridium perfringens (strain 13 / Type A).